The following is a 399-amino-acid chain: Argininosuccinate synthase (399 aa).

ATP is bound by residues 8–16 and Ala35; that span reads AYSGGLDTS. L-citrulline is bound at residue Tyr87. Gly117 lines the ATP pocket. Thr119, Asn123, and Asp124 together coordinate L-aspartate. Asn123 provides a ligand contact to L-citrulline. L-citrulline-binding residues include Arg127, Ser176, Ser185, Glu261, and Tyr273.

It belongs to the argininosuccinate synthase family. Type 1 subfamily. As to quaternary structure, homotetramer.

The protein resides in the cytoplasm. It catalyses the reaction L-citrulline + L-aspartate + ATP = 2-(N(omega)-L-arginino)succinate + AMP + diphosphate + H(+). Its pathway is amino-acid biosynthesis; L-arginine biosynthesis; L-arginine from L-ornithine and carbamoyl phosphate: step 2/3. This is Argininosuccinate synthase from Buchnera aphidicola subsp. Cinara cedri (strain Cc).